Consider the following 383-residue polypeptide: Protein salvador homolog 1 (383 aa).

Phosphoserine occurs at positions 94 and 136. 2 consecutive WW domains span residues 199–232 and 234–267; these read LPLP…HPLE and EGLP…HPCA. A Phosphothreonine modification is found at threonine 210. One can recognise an SARAH domain in the interval 321–368; that stretch reads ILKWELFQLADLDTYQGMLKLLFMKELEQIVKMYEAYRQALLTELENR. Positions 344 to 373 form a coiled coil; it reads MKELEQIVKMYEAYRQALLTELENRKQRQQ.

Homodimer. Stabilized through interaction with STK3/MST2 or STK4/MST1. Interacts (via SARAH domain) with isoform 1 of NEK2. Interacts with ESR1 only in the presence of STK3/MST2. Interacts with WTIP and AJUBA. Phosphorylated by STK3/MST2 and STK4/MST1. Phosphorylation is not required for SAV1 stability and may increase the number of protein binding sites on the scaffold molecule. As to expression, ubiquitously expressed in adult tissues with highest expression in the pancreas, aorta and interventricular septum and lowest expression in skeletal muscle. Expression was higher in fetal than in the adult heart. Expressed in various cell lines.

It localises to the nucleus. Its subcellular location is the cytoplasm. In terms of biological role, regulator of STK3/MST2 and STK4/MST1 in the Hippo signaling pathway which plays a pivotal role in organ size control and tumor suppression by restricting proliferation and promoting apoptosis. The core of this pathway is composed of a kinase cascade wherein STK3/MST2 and STK4/MST1, in complex with its regulatory protein SAV1, phosphorylates and activates LATS1/2 in complex with its regulatory protein MOB1, which in turn phosphorylates and inactivates YAP1 oncoprotein and WWTR1/TAZ. Phosphorylation of YAP1 by LATS1/2 inhibits its translocation into the nucleus to regulate cellular genes important for cell proliferation, cell death, and cell migration. SAV1 is required for STK3/MST2 and STK4/MST1 activation and promotes cell-cycle exit and terminal differentiation in developing epithelial tissues. Plays a role in centrosome disjunction by regulating the localization of NEK2 to centrosomes, and its ability to phosphorylate CROCC and CEP250. In conjunction with STK3/MST2, activates the transcriptional activity of ESR1 through the modulation of its phosphorylation. The polypeptide is Protein salvador homolog 1 (Homo sapiens (Human)).